The chain runs to 183 residues: Gamma-crystallin N-A (183 aa).

4 Beta/gamma crystallin 'Greek key' domains span residues 6 to 46, 47 to 89, 95 to 136, and 138 to 180; these read GKIV…RVES, GAWV…KPIK, YRME…KVYG, and GAWA…RRVV.

This sequence belongs to the beta/gamma-crystallin family. In terms of assembly, monomer.

Functionally, crystallins are the dominant structural components of the vertebrate eye lens. The sequence is that of Gamma-crystallin N-A (crygna) from Danio rerio (Zebrafish).